The chain runs to 664 residues: ATP synthase subunit alpha 2 (664 aa).

Residue 180-187 (GDRATGKT) participates in ATP binding. The segment at 525–664 (MPAEDAAGDI…DAEAEARHKR (140 aa)) is disordered. The segment covering 543–588 (ARGDADRDADHGANREVSREVSPEASREVSREVSCEVSHEADRDAA) has biased composition (basic and acidic residues). Positions 589–599 (ADAARVAGRAP) are enriched in low complexity. Residues 621-639 (ADGDRASASRPRPDARGDA) show a composition bias toward basic and acidic residues.

Belongs to the ATPase alpha/beta chains family. As to quaternary structure, F-type ATPases have 2 components, CF(1) - the catalytic core - and CF(0) - the membrane proton channel. CF(1) has five subunits: alpha(3), beta(3), gamma(1), delta(1), epsilon(1). CF(0) has three main subunits: a(1), b(2) and c(9-12). The alpha and beta chains form an alternating ring which encloses part of the gamma chain. CF(1) is attached to CF(0) by a central stalk formed by the gamma and epsilon chains, while a peripheral stalk is formed by the delta and b chains.

Its subcellular location is the cell inner membrane. The catalysed reaction is ATP + H2O + 4 H(+)(in) = ADP + phosphate + 5 H(+)(out). In terms of biological role, produces ATP from ADP in the presence of a proton gradient across the membrane. The alpha chain is a regulatory subunit. The protein is ATP synthase subunit alpha 2 of Burkholderia pseudomallei (strain 1710b).